The primary structure comprises 697 residues: Pentatricopeptide repeat-containing protein 1, mitochondrial (697 aa).

A mitochondrion-targeting transit peptide spans M1 to H36. PPR repeat units follow at residues R257–K288 and S294–F328.

Its subcellular location is the mitochondrion. Its function is as follows. Mitochondrial RNA-binding protein required for the stability of the cox2 and cox3 mRNAs. The sequence is that of Pentatricopeptide repeat-containing protein 1, mitochondrial (ppr1) from Schizosaccharomyces pombe (strain 972 / ATCC 24843) (Fission yeast).